The chain runs to 25 residues: Hemocyanin subunit 2 (25 aa).

This sequence belongs to the tyrosinase family. Hemocyanin subfamily. As to expression, hemolymph.

It localises to the secreted. The protein resides in the extracellular space. Functionally, hemocyanins are copper-containing oxygen carriers occurring freely dissolved in the hemolymph of many mollusks and arthropods. In Carcinus maenas (Common shore crab), this protein is Hemocyanin subunit 2.